The following is a 297-amino-acid chain: Urease accessory protein UreD (297 aa).

This sequence belongs to the UreD family. In terms of assembly, ureD, UreF and UreG form a complex that acts as a GTP-hydrolysis-dependent molecular chaperone, activating the urease apoprotein by helping to assemble the nickel containing metallocenter of UreC. The UreE protein probably delivers the nickel.

It localises to the cytoplasm. Its function is as follows. Required for maturation of urease via the functional incorporation of the urease nickel metallocenter. The polypeptide is Urease accessory protein UreD (Anaeromyxobacter sp. (strain Fw109-5)).